The following is an 89-amino-acid chain: Small ribosomal subunit protein bS16 (89 aa).

It belongs to the bacterial ribosomal protein bS16 family.

This is Small ribosomal subunit protein bS16 from Gloeobacter violaceus (strain ATCC 29082 / PCC 7421).